The primary structure comprises 432 residues: D-amino acid dehydrogenase (432 aa).

Val-3–Trp-17 lines the FAD pocket.

Belongs to the DadA oxidoreductase family. It depends on FAD as a cofactor.

It catalyses the reaction a D-alpha-amino acid + A + H2O = a 2-oxocarboxylate + AH2 + NH4(+). It functions in the pathway amino-acid degradation; D-alanine degradation; NH(3) and pyruvate from D-alanine: step 1/1. In terms of biological role, oxidative deamination of D-amino acids. This Enterobacter sp. (strain 638) protein is D-amino acid dehydrogenase.